A 73-amino-acid polypeptide reads, in one-letter code: Antimicrobial peptide lumbricin-PG (73 aa).

Positions 1 to 14 (MLLTISDFLFLSLT) are cleaved as a signal peptide. The segment at 25-48 (RPWSDRKNNYSGPQFTYPPEKAPP) is disordered.

It localises to the secreted. Its function is as follows. Displays antimicrobial activity against the Gram-positive bacterium S.aureus ATCC 2592, the Gram-negative bacteria E.coli ATCC 25922 and P.aeruginosa ATCC 27853, and the fungus C.albicans ATCC 2002. Displays stronger activity against P.aeruginosa and S.aureus than E.coli. Displays very weak hemolytic activity. In Metaphire guillelmi (Earthworm), this protein is Antimicrobial peptide lumbricin-PG.